Reading from the N-terminus, the 139-residue chain is D-ribose pyranase (139 aa).

The active-site Proton donor is histidine 20. Substrate contacts are provided by residues aspartate 28, histidine 106, and 128–130; that span reads YAN.

The protein belongs to the RbsD / FucU family. RbsD subfamily. As to quaternary structure, homodecamer.

The protein resides in the cytoplasm. It catalyses the reaction beta-D-ribopyranose = beta-D-ribofuranose. The protein operates within carbohydrate metabolism; D-ribose degradation; D-ribose 5-phosphate from beta-D-ribopyranose: step 1/2. Catalyzes the interconversion of beta-pyran and beta-furan forms of D-ribose. The chain is D-ribose pyranase from Haemophilus influenzae (strain 86-028NP).